Here is a 350-residue protein sequence, read N- to C-terminus: MNKSTLAIVVSIIASASVHAAEVYNKNGNKLDVYGKVKAMHYMSDYDSKDGDQSYVRFGFKGETQINDQLTGYGRWEAEFASNKAESDSSQQKTRLAFAGLKLKDIGSFDYGRNLGALYDVEAWTDMFPEFGGDSSAQTDNFMTKRASGLATYRNTDFFGIVDGLDLTLQYQGKNEDRDVKKQNGDGFGTSVSYDFGGSDFAVSGAYTLSDRTREQNLQRRGTGDKAEAWATGVKYDANDIYIATFYSETRNMTPVSGGFANKTQNFEAVIQYQFDFGLRPSLGYVLSKGKDIEGVGSEDLVNYIDVGATYYFNKNMSAFVDYKINQLDSDNTLGINDDDIVAIGLTYQF.

Residues 1-20 form the signal peptide; the sequence is MNKSTLAIVVSIIASASVHA.

The protein belongs to the Gram-negative porin family. In terms of assembly, homotrimer.

Its subcellular location is the cell outer membrane. Functionally, uptake of inorganic phosphate, phosphorylated compounds, and some other negatively charged solutes. The protein is Outer membrane porin PhoE (phoE) of Salmonella typhimurium (strain LT2 / SGSC1412 / ATCC 700720).